A 1779-amino-acid chain; its full sequence is 5-methyl-1-naphthoate synthase (1779 aa).

The Ketosynthase family 3 (KS3) domain occupies 10 to 433; sequence VEPLAVIGMS…GSIAHAVLQQ (424 aa). Active-site for beta-ketoacyl synthase activity residues include Cys-181, His-316, and His-356. Positions 902-1027 are N-terminal hotdog fold; it reads HTLIGARTTV…ATVVHEPEVG (126 aa). The PKS/mFAS DH domain occupies 902–1180; the sequence is HTLIGARTTV…YVKVQDIGSG (279 aa). A C-terminal hotdog fold region spans residues 1042–1180; that stretch reads PVSWTWAKVD…YVKVQDIGSG (139 aa). Residues 1664–1742 form the Carrier domain; sequence GELPELVLKV…ALAEFLAAEV (79 aa). Ser-1702 is subject to O-(pantetheine 4'-phosphoryl)serine. The segment at 1746–1771 is disordered; it reads TADAEETDPVAGLPAPQQGSGTAEQL.

It catalyses the reaction 5 malonyl-CoA + acetyl-CoA + 3 NADPH + 7 H(+) = 5-methyl-1-naphthoate + 5 CO2 + 3 NADP(+) + 6 CoA + 4 H2O. It functions in the pathway antibiotic biosynthesis. Its function is as follows. Polyketide synthase that catalyzes the biosynthesis of the bicyclic aromatic compound 5-methyl-1-naphthoate in the biosynthesis of the antitumor antibiotic azinomycin B. The sequence is that of 5-methyl-1-naphthoate synthase from Streptomyces sahachiroi.